Here is a 633-residue protein sequence, read N- to C-terminus: Extracellular metalloproteinase 3 (633 aa).

Residues 1–18 (MHGLLLAGLLALPMNVLA) form the signal peptide. Residues 19 to 246 (YPAEQHASNV…VHNVVDYVAS (228 aa)) constitute a propeptide that is removed on maturation. The N-linked (GlcNAc...) asparagine glycan is linked to Asn410. His429 is a Zn(2+) binding site. Glu430 is a catalytic residue. Residue His433 participates in Zn(2+) binding. Residues Asn480 and Asn622 are each glycosylated (N-linked (GlcNAc...) asparagine).

It belongs to the peptidase M36 family. Requires Zn(2+) as cofactor.

Its subcellular location is the secreted. Its function is as follows. Secreted metalloproteinase probably acting as a virulence factor. In Trichophyton rubrum (Athlete's foot fungus), this protein is Extracellular metalloproteinase 3 (MEP3).